Consider the following 108-residue polypeptide: Transmembrane protein 141 (108 aa).

The next 2 membrane-spanning stretches (helical) occupy residues 32 to 52 (MKGV…QMFI) and 58 to 78 (YPLQ…SYGV).

It belongs to the TMEM141 family.

It is found in the membrane. This chain is Transmembrane protein 141 (TMEM141), found in Homo sapiens (Human).